The following is a 156-amino-acid chain: Transcription factor MafF (156 aa).

The basic motif stretch occupies residues 51-76 (RLKQRRRTLKNRGYAASCRVKRVCQK). In terms of domain architecture, bZIP spans 51–114 (RLKQRRRTLK…DALRGKCEAL (64 aa)). The interval 79–93 (LQKQKSELEREVDKL) is leucine-zipper.

Belongs to the bZIP family. Maf subfamily. As to quaternary structure, monomer and homo- or heterodimer. Interacts with MIP. Forms high affinity heterodimers with members of the CNC-bZIP family such as NFE2L1/NRF1. As to expression, highly expressed in the lung, lower expression in the brain, thymus, liver, spleen, intestine, kidney, heart, muscle, and ovary. Not significantly expressed in hematopoietic cells.

The protein localises to the nucleus. Since they lack a putative transactivation domain, the small Mafs behave as transcriptional repressors when they dimerize among themselves. However, they seem to serve as transcriptional activators by dimerizing with other (usually larger) basic-zipper proteins, such as NFE2L1/NRF1, and recruiting them to specific DNA-binding sites. Interacts with the upstream promoter region of the oxytocin receptor gene. May be a transcriptional enhancer in the up-regulation of the oxytocin receptor gene at parturition. The polypeptide is Transcription factor MafF (Maff) (Mus musculus (Mouse)).